The chain runs to 764 residues: FAST kinase domain-containing protein 5, mitochondrial (764 aa).

The N-terminal 27 residues, 1 to 27 (MAATLKSLKLLRYQAFCSPSAFGAVRS), are a transit peptide targeting the mitochondrion. The interval 68–94 (IPTTSSARPGLEFSKTSSSKASTLQLG) is disordered. Residues 81–93 (SKTSSSKASTLQL) are compositionally biased toward polar residues. Serine 95 carries the post-translational modification Phosphoserine. N6-acetyllysine is present on lysine 507. The RAP domain maps to 697–757 (LAIQFTNRNQ…RLEKLAFLHE (61 aa)).

It belongs to the FAST kinase family. Found in a complex with GRSF1, DDX28, DHX30 and FASTKD2. Associates with the 12S mitochondrial rRNA (12S mt-rRNA).

The protein resides in the mitochondrion matrix. Its subcellular location is the mitochondrion nucleoid. In terms of biological role, plays an important role in the processing of non-canonical mitochondrial mRNA precursors. This chain is FAST kinase domain-containing protein 5, mitochondrial (FASTKD5), found in Pongo abelii (Sumatran orangutan).